Consider the following 257-residue polypeptide: Imidazole glycerol phosphate synthase subunit HisF (257 aa).

Residues Asp12 and Asp131 contribute to the active site.

The protein belongs to the HisA/HisF family. As to quaternary structure, heterodimer of HisH and HisF.

The protein resides in the cytoplasm. The catalysed reaction is 5-[(5-phospho-1-deoxy-D-ribulos-1-ylimino)methylamino]-1-(5-phospho-beta-D-ribosyl)imidazole-4-carboxamide + L-glutamine = D-erythro-1-(imidazol-4-yl)glycerol 3-phosphate + 5-amino-1-(5-phospho-beta-D-ribosyl)imidazole-4-carboxamide + L-glutamate + H(+). It participates in amino-acid biosynthesis; L-histidine biosynthesis; L-histidine from 5-phospho-alpha-D-ribose 1-diphosphate: step 5/9. Functionally, IGPS catalyzes the conversion of PRFAR and glutamine to IGP, AICAR and glutamate. The HisF subunit catalyzes the cyclization activity that produces IGP and AICAR from PRFAR using the ammonia provided by the HisH subunit. The sequence is that of Imidazole glycerol phosphate synthase subunit HisF from Kineococcus radiotolerans (strain ATCC BAA-149 / DSM 14245 / SRS30216).